Consider the following 404-residue polypeptide: Cysteine desulfurase IscS (404 aa).

Residues Ala-75–Thr-76, Asn-155, Gln-183, and Ser-203–His-205 each bind pyridoxal 5'-phosphate. The residue at position 206 (Lys-206) is an N6-(pyridoxal phosphate)lysine. Thr-243 lines the pyridoxal 5'-phosphate pocket. Catalysis depends on Cys-328, which acts as the Cysteine persulfide intermediate. Position 328 (Cys-328) interacts with [2Fe-2S] cluster.

This sequence belongs to the class-V pyridoxal-phosphate-dependent aminotransferase family. NifS/IscS subfamily. As to quaternary structure, homodimer. Forms a heterotetramer with IscU, interacts with other sulfur acceptors. The cofactor is pyridoxal 5'-phosphate.

The protein localises to the cytoplasm. It carries out the reaction (sulfur carrier)-H + L-cysteine = (sulfur carrier)-SH + L-alanine. The protein operates within cofactor biosynthesis; iron-sulfur cluster biosynthesis. In terms of biological role, master enzyme that delivers sulfur to a number of partners involved in Fe-S cluster assembly, tRNA modification or cofactor biosynthesis. Catalyzes the removal of elemental sulfur atoms from cysteine to produce alanine. Functions as a sulfur delivery protein for Fe-S cluster synthesis onto IscU, an Fe-S scaffold assembly protein, as well as other S acceptor proteins. This is Cysteine desulfurase IscS from Neisseria gonorrhoeae (strain ATCC 700825 / FA 1090).